Reading from the N-terminus, the 189-residue chain is Ribosome maturation factor RimM (189 aa).

The PRC barrel domain maps to 118–189 (SGEYYWDDLI…IILVDWDENF (72 aa)).

It belongs to the RimM family. In terms of assembly, binds ribosomal protein uS19.

The protein resides in the cytoplasm. An accessory protein needed during the final step in the assembly of 30S ribosomal subunit, possibly for assembly of the head region. Essential for efficient processing of 16S rRNA. May be needed both before and after RbfA during the maturation of 16S rRNA. It has affinity for free ribosomal 30S subunits but not for 70S ribosomes. The chain is Ribosome maturation factor RimM from Ruthia magnifica subsp. Calyptogena magnifica.